A 296-amino-acid chain; its full sequence is Ribosomal protein L11 methyltransferase (296 aa).

S-adenosyl-L-methionine is bound by residues threonine 151, glycine 172, aspartate 194, and asparagine 233.

Belongs to the methyltransferase superfamily. PrmA family.

The protein localises to the cytoplasm. It catalyses the reaction L-lysyl-[protein] + 3 S-adenosyl-L-methionine = N(6),N(6),N(6)-trimethyl-L-lysyl-[protein] + 3 S-adenosyl-L-homocysteine + 3 H(+). Methylates ribosomal protein L11. The sequence is that of Ribosomal protein L11 methyltransferase from Dechloromonas aromatica (strain RCB).